A 535-amino-acid chain; its full sequence is Light-independent protochlorophyllide reductase subunit B (535 aa).

D36 is a [4Fe-4S] cluster binding site. D287 functions as the Proton donor in the catalytic mechanism. 422–423 contacts substrate; sequence GL.

This sequence belongs to the ChlB/BchB/BchZ family. As to quaternary structure, protochlorophyllide reductase is composed of three subunits; BchL, BchN and BchB. Forms a heterotetramer of two BchB and two BchN subunits. It depends on [4Fe-4S] cluster as a cofactor.

The catalysed reaction is chlorophyllide a + oxidized 2[4Fe-4S]-[ferredoxin] + 2 ADP + 2 phosphate = protochlorophyllide a + reduced 2[4Fe-4S]-[ferredoxin] + 2 ATP + 2 H2O. It functions in the pathway porphyrin-containing compound metabolism; bacteriochlorophyll biosynthesis (light-independent). Component of the dark-operative protochlorophyllide reductase (DPOR) that uses Mg-ATP and reduced ferredoxin to reduce ring D of protochlorophyllide (Pchlide) to form chlorophyllide a (Chlide). This reaction is light-independent. The NB-protein (BchN-BchB) is the catalytic component of the complex. The chain is Light-independent protochlorophyllide reductase subunit B from Rhodopseudomonas palustris (strain BisB5).